Here is a 228-residue protein sequence, read N- to C-terminus: Ribulose-phosphate 3-epimerase (228 aa).

S9 contributes to the substrate binding site. 4 residues coordinate a divalent metal cation: H34, D36, H68, and D177. Catalysis depends on D36, which acts as the Proton acceptor. Substrate is bound by residues H68, 177–179, and 199–200; these read DGG and GS. D177 (proton donor) is an active-site residue.

It belongs to the ribulose-phosphate 3-epimerase family. Requires a divalent metal cation as cofactor.

It carries out the reaction D-ribulose 5-phosphate = D-xylulose 5-phosphate. Its pathway is carbohydrate degradation. Its function is as follows. Catalyzes the reversible epimerization of D-ribulose 5-phosphate to D-xylulose 5-phosphate. In Buchnera aphidicola subsp. Acyrthosiphon pisum (strain APS) (Acyrthosiphon pisum symbiotic bacterium), this protein is Ribulose-phosphate 3-epimerase.